The following is a 231-amino-acid chain: Phosphatidylserine decarboxylase proenzyme (231 aa).

Catalysis depends on serine 188, which acts as the Schiff-base intermediate with substrate; via pyruvic acid. Position 188 is a pyruvic acid (Ser); by autocatalysis (serine 188).

The protein belongs to the phosphatidylserine decarboxylase family. PSD-A subfamily. Heterodimer of a large membrane-associated beta subunit and a small pyruvoyl-containing alpha subunit. The cofactor is pyruvate. Is synthesized initially as an inactive proenzyme. Formation of the active enzyme involves a self-maturation process in which the active site pyruvoyl group is generated from an internal serine residue via an autocatalytic post-translational modification. Two non-identical subunits are generated from the proenzyme in this reaction, and the pyruvate is formed at the N-terminus of the alpha chain, which is derived from the carboxyl end of the proenzyme. The post-translation cleavage follows an unusual pathway, termed non-hydrolytic serinolysis, in which the side chain hydroxyl group of the serine supplies its oxygen atom to form the C-terminus of the beta chain, while the remainder of the serine residue undergoes an oxidative deamination to produce ammonia and the pyruvoyl prosthetic group on the alpha chain.

It localises to the cell membrane. The catalysed reaction is a 1,2-diacyl-sn-glycero-3-phospho-L-serine + H(+) = a 1,2-diacyl-sn-glycero-3-phosphoethanolamine + CO2. It functions in the pathway phospholipid metabolism; phosphatidylethanolamine biosynthesis; phosphatidylethanolamine from CDP-diacylglycerol: step 2/2. Functionally, catalyzes the formation of phosphatidylethanolamine (PtdEtn) from phosphatidylserine (PtdSer). In Rickettsia bellii (strain OSU 85-389), this protein is Phosphatidylserine decarboxylase proenzyme.